The sequence spans 405 residues: Argininosuccinate synthase (405 aa).

11-19 (AYSGGLDTS) serves as a coordination point for ATP. Y90 serves as a coordination point for L-citrulline. An ATP-binding site is contributed by G119. The L-aspartate site is built by T121, N125, and D126. N125 is a binding site for L-citrulline. L-citrulline contacts are provided by R129, S178, S187, E263, and Y275.

This sequence belongs to the argininosuccinate synthase family. Type 1 subfamily. As to quaternary structure, homotetramer.

The protein resides in the cytoplasm. The catalysed reaction is L-citrulline + L-aspartate + ATP = 2-(N(omega)-L-arginino)succinate + AMP + diphosphate + H(+). Its pathway is amino-acid biosynthesis; L-arginine biosynthesis; L-arginine from L-ornithine and carbamoyl phosphate: step 2/3. The polypeptide is Argininosuccinate synthase (Legionella pneumophila (strain Paris)).